The sequence spans 193 residues: Putative 3-methyladenine DNA glycosylase (193 aa).

The protein belongs to the DNA glycosylase MPG family.

This Francisella tularensis subsp. tularensis (strain FSC 198) protein is Putative 3-methyladenine DNA glycosylase.